We begin with the raw amino-acid sequence, 411 residues long: Serine--tRNA ligase (411 aa).

T226 to E228 lines the L-serine pocket. R257–E259 contacts ATP. E280 provides a ligand contact to L-serine. ATP is bound at residue E344–S347. Residue S379 participates in L-serine binding.

The protein belongs to the class-II aminoacyl-tRNA synthetase family. Type-1 seryl-tRNA synthetase subfamily. As to quaternary structure, homodimer. The tRNA molecule binds across the dimer.

The protein localises to the cytoplasm. The catalysed reaction is tRNA(Ser) + L-serine + ATP = L-seryl-tRNA(Ser) + AMP + diphosphate + H(+). It carries out the reaction tRNA(Sec) + L-serine + ATP = L-seryl-tRNA(Sec) + AMP + diphosphate + H(+). It functions in the pathway aminoacyl-tRNA biosynthesis; selenocysteinyl-tRNA(Sec) biosynthesis; L-seryl-tRNA(Sec) from L-serine and tRNA(Sec): step 1/1. In terms of biological role, catalyzes the attachment of serine to tRNA(Ser). Is also able to aminoacylate tRNA(Sec) with serine, to form the misacylated tRNA L-seryl-tRNA(Sec), which will be further converted into selenocysteinyl-tRNA(Sec). The sequence is that of Serine--tRNA ligase from Campylobacter jejuni subsp. jejuni serotype O:23/36 (strain 81-176).